The primary structure comprises 283 residues: Bis(5'-nucleosyl)-tetraphosphatase, symmetrical (283 aa).

This sequence belongs to the Ap4A hydrolase family.

It catalyses the reaction P(1),P(4)-bis(5'-adenosyl) tetraphosphate + H2O = 2 ADP + 2 H(+). Functionally, hydrolyzes diadenosine 5',5'''-P1,P4-tetraphosphate to yield ADP. The chain is Bis(5'-nucleosyl)-tetraphosphatase, symmetrical from Cronobacter sakazakii (strain ATCC BAA-894) (Enterobacter sakazakii).